The chain runs to 260 residues: NAD-dependent protein deacetylase (260 aa).

The Deacetylase sirtuin-type domain maps to 9-260; it reads DDIDGETLDA…QVLPAIVERL (252 aa). NAD(+) contacts are provided by A35, T39, F46, R47, Q114, I116, D117, and H132. F46 lines the nicotinamide pocket. Nicotinamide-binding residues include I116 and D117. H132 (proton acceptor) is an active-site residue. C140, C143, C166, and C168 together coordinate Zn(2+). Positions 206, 207, 231, 248, and 249 each coordinate NAD(+).

It belongs to the sirtuin family. Class U subfamily. Zn(2+) is required as a cofactor.

It localises to the cytoplasm. The catalysed reaction is N(6)-acetyl-L-lysyl-[protein] + NAD(+) + H2O = 2''-O-acetyl-ADP-D-ribose + nicotinamide + L-lysyl-[protein]. Its function is as follows. NAD-dependent protein deacetylase which modulates the activities of several enzymes which are inactive in their acetylated form. Deacetylates the N-terminal lysine residue of Alba, the major archaeal chromatin protein and that, in turn, increases Alba's DNA binding affinity, thereby repressing transcription. This Haloarcula marismortui (strain ATCC 43049 / DSM 3752 / JCM 8966 / VKM B-1809) (Halobacterium marismortui) protein is NAD-dependent protein deacetylase.